We begin with the raw amino-acid sequence, 232 residues long: tRNA1(Val) (adenine(37)-N6)-methyltransferase (232 aa).

The protein belongs to the methyltransferase superfamily. tRNA (adenine-N(6)-)-methyltransferase family.

The protein resides in the cytoplasm. The enzyme catalyses adenosine(37) in tRNA1(Val) + S-adenosyl-L-methionine = N(6)-methyladenosine(37) in tRNA1(Val) + S-adenosyl-L-homocysteine + H(+). Functionally, specifically methylates the adenine in position 37 of tRNA(1)(Val) (anticodon cmo5UAC). This chain is tRNA1(Val) (adenine(37)-N6)-methyltransferase, found in Haemophilus influenzae (strain 86-028NP).